Reading from the N-terminus, the 309-residue chain is DnaJ homolog subfamily B member 7 (309 aa).

One can recognise a J domain in the interval 3–69 (DYYEVLGLQR…EKRDIYDKYG (67 aa)). Positions 282–309 (FSAGVKEGGKRKKKKRKEVQKKSTKRNC) are disordered. The segment covering 290–309 (GKRKKKKRKEVQKKSTKRNC) has biased composition (basic residues).

Its function is as follows. Probably acts as a co-chaperone. This Homo sapiens (Human) protein is DnaJ homolog subfamily B member 7 (DNAJB7).